Consider the following 104-residue polypeptide: MVKIVTSQAEFDSIISQNELVIVDFFAEWCGPCKRIAPFYEECSKTYTKMVFIKVDVDEVSEVTEKENITSMPTFKVYKNGSSVDTLLGANDSALKQLIEKYAA.

The Thioredoxin domain maps to 2 to 104 (VKIVTSQAEF…LKQLIEKYAA (103 aa)). Active-site nucleophile residues include Cys30 and Cys33. Cys30 and Cys33 are joined by a disulfide.

Belongs to the thioredoxin family. The disulfide bond between Cys-30 and Cys-33 acts as a redox-active center and is reduced by thioredoxin reductase TRXR.

It is found in the cytoplasm. Participates in various redox reactions through the reversible oxidation of its active center dithiol to a disulfide and catalyzes dithiol-disulfide exchange reactions. By modifying the redox status of targeted proteins, induces changes in their structure and activity. Reduces oxidized glutathione (GSSG), thereby acting as a backup for the glutathione redox system. Reduces nitroglutathione (GSNO), a compound involved in the transport of nitric oxide (NO). Also reduces oxidative stress by detoxifying hydrogen peroxide, tert-butyl hydroperoxide and cumene hydroperoxide. Activates ornithine aminotransferase OAT by reducing a disulfide bond in the substrate binding loop, thereby enhancing the affinity of OAT for its substrates. May reduce S-adenosyl-L-homocysteine hydrolase SAHH. The protein is Thioredoxin 1 of Plasmodium falciparum (isolate 3D7).